Here is a 198-residue protein sequence, read N- to C-terminus: MIKKSAAILAGGKSSRMNYRNKAFLKYEEDYFIERIIKALKDYEEIIIISNNPEEYKEFGLKVFKDIYPSQGPLSGIHSALNHIKNDYCLVVACDMPFINKDVVNYLGNIKEDYEILIPKFQERLQPLCAIYKKSCKDIMEKELINNSNKLIKTCFKFSMKVVEEFPFIEKVHKKEIKNFYNINTVDEYEDLIKKKEI.

Residues 9-11 (LAG), lysine 22, aspartate 66, and aspartate 95 each bind GTP. Position 95 (aspartate 95) interacts with Mg(2+).

The protein belongs to the MobA family. The cofactor is Mg(2+).

The protein resides in the cytoplasm. The enzyme catalyses Mo-molybdopterin + GTP + H(+) = Mo-molybdopterin guanine dinucleotide + diphosphate. Transfers a GMP moiety from GTP to Mo-molybdopterin (Mo-MPT) cofactor (Moco or molybdenum cofactor) to form Mo-molybdopterin guanine dinucleotide (Mo-MGD) cofactor. The protein is Probable molybdenum cofactor guanylyltransferase of Clostridium perfringens (strain 13 / Type A).